Consider the following 290-residue polypeptide: HTH-type transcriptional regulator BsdA (290 aa).

The 59-residue stretch at 1–59 (MDIRQLRYFITIAQEQKITSAAKKLHMAQPPLSRQLKQLEDELGVVLFDRNKKKQMTLT) folds into the HTH lysR-type domain. Residues 18–37 (ITSAAKKLHMAQPPLSRQLK) constitute a DNA-binding region (H-T-H motif).

It belongs to the LysR transcriptional regulatory family.

Could be a positive regulator of bsdBCD expression in response to salicylic acid. This chain is HTH-type transcriptional regulator BsdA (bsdA), found in Bacillus subtilis (strain 168).